The following is a 307-amino-acid chain: Protein rep (307 aa).

DNA is bound at residue Tyr-219.

Belongs to the Gram-positive plasmids replication protein type 1 family.

The protein is Protein rep (repA) of Bacillus sp.